Consider the following 82-residue polypeptide: Cytochrome b559 subunit alpha (82 aa).

Residues Ile22 to Phe36 traverse the membrane as a helical segment. Heme is bound at residue His24.

The protein belongs to the PsbE/PsbF family. As to quaternary structure, heterodimer of an alpha subunit and a beta subunit. PSII is composed of 1 copy each of membrane proteins PsbA, PsbB, PsbC, PsbD, PsbE, PsbF, PsbH, PsbI, PsbJ, PsbK, PsbL, PsbM, PsbT, PsbX, PsbY, Psb30/Ycf12, peripheral proteins PsbO, CyanoQ (PsbQ), PsbU, PsbV and a large number of cofactors. It forms dimeric complexes. Heme b is required as a cofactor.

Its subcellular location is the cellular thylakoid membrane. Its function is as follows. This b-type cytochrome is tightly associated with the reaction center of photosystem II (PSII). PSII is a light-driven water:plastoquinone oxidoreductase that uses light energy to abstract electrons from H(2)O, generating O(2) and a proton gradient subsequently used for ATP formation. It consists of a core antenna complex that captures photons, and an electron transfer chain that converts photonic excitation into a charge separation. The chain is Cytochrome b559 subunit alpha from Prochlorococcus marinus (strain NATL1A).